A 147-amino-acid chain; its full sequence is Hemoglobin subunit beta (147 aa).

The 145-residue stretch at E3 to H147 folds into the Globin domain. Heme b is bound by residues H64 and H93.

This sequence belongs to the globin family. As to quaternary structure, hb 1 is a heterotetramer of two alpha-1 and two beta chains. Hb 2 is a heterotetramer of two alpha-2 and two beta chains. Red blood cells.

In terms of biological role, involved in oxygen transport from gills to the various peripheral tissues. This is Hemoglobin subunit beta (hbb) from Cottoperca gobio (Frogmouth).